We begin with the raw amino-acid sequence, 1416 residues long: 1-phosphatidylinositol 4,5-bisphosphate phosphodiesterase eta-2 (1416 aa).

The interval 1-155 is necessary for plasma membrane localization; the sequence is MSGPWPSPDS…WVTGLRYLMA (155 aa). The 109-residue stretch at 47–155 folds into the PH domain; sequence GAMQEGMQMV…WVTGLRYLMA (109 aa). 2 consecutive EF-hand domains span residues 169 to 204 and 205 to 241; these read TRDQ…LNVN and LPRQ…MSTR. Asp-182, Asn-184, Asp-186, Ser-188, and Glu-193 together coordinate Ca(2+). A PI-PLC X-box domain is found at 326–471; that stretch reads QDMTQPLSHY…LKGKILVKGK (146 aa). The active site involves His-341. 3 residues coordinate Ca(2+): Asn-342, Glu-371, and Asp-373. Residue His-385 is part of the active site. Residue Glu-420 coordinates Ca(2+). Substrate is bound by residues Lys-469 and Lys-471. 2 positions are modified to phosphoserine: Ser-487 and Ser-491. The interval 535 to 620 is disordered; it reads DPNNFSVSTL…RGATRQKKTM (86 aa). Residues 537 to 546 are compositionally biased toward polar residues; that stretch reads NNFSVSTLSP. Residues 581–592 are compositionally biased toward basic residues; sequence SRRKKKGSKLKK. Phosphoserine is present on residues Ser-595 and Ser-605. The PI-PLC Y-box domain maps to 626-740; sequence LSDLVKYTKS…GYVLKPGCMC (115 aa). Positions 653 and 680 each coordinate substrate. Residues 740-869 form the C2 domain; that stretch reads CQGVFNPNSE…PGYRHVYLEG (130 aa). 6 residues coordinate Ca(2+): Ile-784, Asp-786, Asp-810, Asp-839, His-840, and Asp-841. 3 disordered regions span residues 905–1109, 1121–1222, and 1315–1405; these read GSLD…GGWR, YSDA…LQPR, and ITSP…GPAS. Residues 1011 to 1021 are compositionally biased toward pro residues; that stretch reads APGPGPPPPAA. The segment covering 1073-1083 has biased composition (polar residues); sequence GSQTDGRSQPR. Over residues 1143–1166 the composition is skewed to low complexity; it reads VSSSSSMSSSDTVIDLSLPSLGLG. The span at 1199-1208 shows a compositional bias: polar residues; the sequence is KSKSNPNLRA. The segment covering 1324 to 1333 has biased composition (gly residues); that stretch reads AGEGVAGGPG.

Ca(2+) is required as a cofactor. As to expression, expressed in retina and kidney.

The protein localises to the cytoplasm. It is found in the cell membrane. It carries out the reaction a 1,2-diacyl-sn-glycero-3-phospho-(1D-myo-inositol-4,5-bisphosphate) + H2O = 1D-myo-inositol 1,4,5-trisphosphate + a 1,2-diacyl-sn-glycerol + H(+). With respect to regulation, activity is stimulated by GNB1:GNG2. Its function is as follows. The production of the second messenger molecules diacylglycerol (DAG) and inositol 1,4,5-trisphosphate (IP3) is mediated by activated phosphatidylinositol-specific phospholipase C enzymes. This phospholipase activity is very sensitive to calcium. May be important for formation and maintenance of the neuronal network in the postnatal brain. This chain is 1-phosphatidylinositol 4,5-bisphosphate phosphodiesterase eta-2, found in Homo sapiens (Human).